A 181-amino-acid polypeptide reads, in one-letter code: dCTP deaminase (181 aa).

DCTP-binding positions include 100–105 and aspartate 116; that span reads RSTFAR. Residue glutamate 126 is the Proton donor/acceptor of the active site. 2 residues coordinate dCTP: tyrosine 158 and glutamine 165. The disordered stretch occupies residues 160 to 181; it reads GKYQGQRGVTPPKLDNSSSKNF.

It belongs to the dCTP deaminase family. Homotrimer.

The catalysed reaction is dCTP + H2O + H(+) = dUTP + NH4(+). It functions in the pathway pyrimidine metabolism; dUMP biosynthesis; dUMP from dCTP (dUTP route): step 1/2. Functionally, catalyzes the deamination of dCTP to dUTP. The sequence is that of dCTP deaminase from Desulfurococcus amylolyticus (strain DSM 18924 / JCM 16383 / VKM B-2413 / 1221n) (Desulfurococcus kamchatkensis).